The primary structure comprises 75 residues: Exodeoxyribonuclease 7 small subunit (75 aa).

It belongs to the XseB family. As to quaternary structure, heterooligomer composed of large and small subunits.

The protein localises to the cytoplasm. The catalysed reaction is Exonucleolytic cleavage in either 5'- to 3'- or 3'- to 5'-direction to yield nucleoside 5'-phosphates.. Functionally, bidirectionally degrades single-stranded DNA into large acid-insoluble oligonucleotides, which are then degraded further into small acid-soluble oligonucleotides. The chain is Exodeoxyribonuclease 7 small subunit from Listeria welshimeri serovar 6b (strain ATCC 35897 / DSM 20650 / CCUG 15529 / CIP 8149 / NCTC 11857 / SLCC 5334 / V8).